Consider the following 846-residue polypeptide: uncharacterized protein (846 aa).

6 WD repeats span residues 88 to 129 (TKHI…LLYD), 132 to 172 (EHSR…STIT), 175 to 215 (GNSE…LPFL), 219 to 258 (AHNGVVLCVNYSPNGVFLASCGRDKTIRIWDSTSNKKKSL), 262 to 309 (NNVS…IPYR), and 313 to 348 (CHDSIVSTMHWASTELLWSCSKDGIFSQTRVENAFN). The disordered stretch occupies residues 541-560 (PREASTPSESSNSSIESEDN). Low complexity predominate over residues 544–555 (ASTPSESSNSSI). A WD 7 repeat occupies 624-663 (FHRSSVTSASIKSREAVLSAGNSSRRASIFLDQLSLHGDT).

This is an uncharacterized protein from Schizosaccharomyces pombe (strain 972 / ATCC 24843) (Fission yeast).